Here is a 296-residue protein sequence, read N- to C-terminus: 33 kDa chaperonin (296 aa).

Disulfide bonds link Cys236/Cys238 and Cys269/Cys272.

The protein belongs to the HSP33 family. Post-translationally, under oxidizing conditions two disulfide bonds are formed involving the reactive cysteines. Under reducing conditions zinc is bound to the reactive cysteines and the protein is inactive.

The protein localises to the cytoplasm. Redox regulated molecular chaperone. Protects both thermally unfolding and oxidatively damaged proteins from irreversible aggregation. Plays an important role in the bacterial defense system toward oxidative stress. This chain is 33 kDa chaperonin, found in Lactobacillus acidophilus (strain ATCC 700396 / NCK56 / N2 / NCFM).